The sequence spans 88 residues: UPF0250 protein Shal_3239 (88 aa).

The protein belongs to the UPF0250 family.

The protein is UPF0250 protein Shal_3239 of Shewanella halifaxensis (strain HAW-EB4).